The chain runs to 601 residues: Glutathione-regulated potassium-efflux system protein KefB (601 aa).

13 helical membrane passes run 4-24 (SDFL…VPLA), 29-49 (IGAV…GLGF), 55-75 (EILH…GLEL), 87-107 (IFGV…GLLM), 115-135 (AAVV…LQLM), 152-172 (VLLF…LLAG), 177-197 (HFDW…LIGG), 207-227 (FIAA…LVLG), 230-250 (LFMD…GVLL), 268-288 (GLLL…GVLY), 291-311 (LLWV…VLYL), 324-344 (MQFA…FSTA), and 356-376 (ALLL…MKLV). The RCK N-terminal domain occupies 400 to 519 (KPQVIVVGFG…AGVTQFSRET (120 aa)).

The protein belongs to the monovalent cation:proton antiporter 2 (CPA2) transporter (TC 2.A.37) family. KefB subfamily. Interacts with the regulatory subunit KefG.

The protein resides in the cell inner membrane. Functionally, pore-forming subunit of a potassium efflux system that confers protection against electrophiles. Catalyzes K(+)/H(+) antiport. The chain is Glutathione-regulated potassium-efflux system protein KefB from Escherichia coli O1:K1 / APEC.